We begin with the raw amino-acid sequence, 557 residues long: Dihydroxy-acid dehydratase (557 aa).

Residue Cys50 participates in [2Fe-2S] cluster binding. A Mg(2+)-binding site is contributed by Asp82. Residue Cys123 participates in [2Fe-2S] cluster binding. Residues Asp124 and Lys125 each coordinate Mg(2+). Lys125 bears the N6-carboxylysine mark. Cys195 provides a ligand contact to [2Fe-2S] cluster. Glu447 contacts Mg(2+). Ser473 functions as the Proton acceptor in the catalytic mechanism.

This sequence belongs to the IlvD/Edd family. In terms of assembly, homodimer. [2Fe-2S] cluster is required as a cofactor. Requires Mg(2+) as cofactor.

It carries out the reaction (2R)-2,3-dihydroxy-3-methylbutanoate = 3-methyl-2-oxobutanoate + H2O. The enzyme catalyses (2R,3R)-2,3-dihydroxy-3-methylpentanoate = (S)-3-methyl-2-oxopentanoate + H2O. Its pathway is amino-acid biosynthesis; L-isoleucine biosynthesis; L-isoleucine from 2-oxobutanoate: step 3/4. It functions in the pathway amino-acid biosynthesis; L-valine biosynthesis; L-valine from pyruvate: step 3/4. Functionally, functions in the biosynthesis of branched-chain amino acids. Catalyzes the dehydration of (2R,3R)-2,3-dihydroxy-3-methylpentanoate (2,3-dihydroxy-3-methylvalerate) into 2-oxo-3-methylpentanoate (2-oxo-3-methylvalerate) and of (2R)-2,3-dihydroxy-3-methylbutanoate (2,3-dihydroxyisovalerate) into 2-oxo-3-methylbutanoate (2-oxoisovalerate), the penultimate precursor to L-isoleucine and L-valine, respectively. This chain is Dihydroxy-acid dehydratase, found in Janthinobacterium sp. (strain Marseille) (Minibacterium massiliensis).